Consider the following 146-residue polypeptide: Bradykinin-like neuropeptide (146 aa).

Positions 1–24 (MTSSIYGFITLSVVALISQTTCRS) are cleaved as a signal peptide. 2 consecutive propeptides follow at residues 25–80 (LDLL…LMEA) and 92–146 (LRSY…FRYG).

In terms of tissue distribution, neuron L5.

It is found in the secreted. In terms of biological role, may have important functions in renal physiology and in animal behavior, as does bradykinin. This Aplysia californica (California sea hare) protein is Bradykinin-like neuropeptide (LUQ-1).